A 343-amino-acid polypeptide reads, in one-letter code: MSLPVNFKIYNPLEALEASHGGGGGITPGSVTGGPGGSIAPGTITSFNLSPGTAASNINSGPDAAVLGSKISKADNTNFGVIEFDPTGDLVQTAAGSGVALLKPGSAANNINSGPPGSINSSQINGGPFLPLSGGTLTGNLVMGPGANITSNPPLNPTDVANKQYVDLSGQKAFAGWTLSSGAFAVSVPAGSTVNAFATTTAPIGNQVWTGADGVTITINGAGIITINNTNTFDTYYVCYFRGNGLLCSNASASPAVYFRFYDETNAANITVEQSLRLISPTIVPAVGGQPFNNYIDFSAFIKVLASSSLNISVKARNPGVDNCLLSTNVSSDVCQVMVIRQG.

It belongs to the IIV-6 219L family.

This is an uncharacterized protein from Invertebrate iridescent virus 6 (IIV-6).